The following is a 476-amino-acid chain: Proline--tRNA ligase (476 aa).

This sequence belongs to the class-II aminoacyl-tRNA synthetase family. ProS type 3 subfamily. In terms of assembly, homodimer.

It localises to the cytoplasm. The enzyme catalyses tRNA(Pro) + L-proline + ATP = L-prolyl-tRNA(Pro) + AMP + diphosphate. Functionally, catalyzes the attachment of proline to tRNA(Pro) in a two-step reaction: proline is first activated by ATP to form Pro-AMP and then transferred to the acceptor end of tRNA(Pro). This is Proline--tRNA ligase from Mycoplasmopsis pulmonis (strain UAB CTIP) (Mycoplasma pulmonis).